Consider the following 469-residue polypeptide: Mannosyl-oligosaccharide 1,2-alpha-mannosidase IA (469 aa).

The Lumenal segment spans residues 1 to 469 (REPADAAVRE…DQKEVEVKVK (469 aa)). Residues C292 and C324 are joined by a disulfide bond. N329 is a glycosylation site (N-linked (GlcNAc...) asparagine). Catalysis depends on E338, which acts as the Proton donor. Position 449 (T449) interacts with Ca(2+).

Belongs to the glycosyl hydrolase 47 family. It depends on Ca(2+) as a cofactor.

It is found in the golgi apparatus membrane. The enzyme catalyses N(4)-(alpha-D-Man-(1-&gt;2)-alpha-D-Man-(1-&gt;2)-alpha-D-Man-(1-&gt;3)-[alpha-D-Man-(1-&gt;2)-alpha-D-Man-(1-&gt;3)-[alpha-D-Man-(1-&gt;2)-alpha-D-Man-(1-&gt;6)]-alpha-D-Man-(1-&gt;6)]-beta-D-Man-(1-&gt;4)-beta-D-GlcNAc-(1-&gt;4)-beta-D-GlcNAc)-L-asparaginyl-[protein] (N-glucan mannose isomer 9A1,2,3B1,2,3) + 4 H2O = N(4)-(alpha-D-Man-(1-&gt;3)-[alpha-D-Man-(1-&gt;3)-[alpha-D-Man-(1-&gt;6)]-alpha-D-Man-(1-&gt;6)]-beta-D-Man-(1-&gt;4)-beta-D-GlcNAc-(1-&gt;4)-beta-D-GlcNAc)-L-asparaginyl-[protein] (N-glucan mannose isomer 5A1,2) + 4 beta-D-mannose. The catalysed reaction is N(4)-(alpha-D-Man-(1-&gt;2)-alpha-D-Man-(1-&gt;2)-alpha-D-Man-(1-&gt;3)-[alpha-D-Man-(1-&gt;3)-[alpha-D-Man-(1-&gt;2)-alpha-D-Man-(1-&gt;6)]-alpha-D-Man-(1-&gt;6)]-beta-D-Man-(1-&gt;4)-beta-D-GlcNAc-(1-&gt;4)-beta-D-GlcNAc)-L-asparaginyl-[protein] (N-glucan mannose isomer 8A1,2,3B1,3) + 3 H2O = N(4)-(alpha-D-Man-(1-&gt;3)-[alpha-D-Man-(1-&gt;3)-[alpha-D-Man-(1-&gt;6)]-alpha-D-Man-(1-&gt;6)]-beta-D-Man-(1-&gt;4)-beta-D-GlcNAc-(1-&gt;4)-beta-D-GlcNAc)-L-asparaginyl-[protein] (N-glucan mannose isomer 5A1,2) + 3 beta-D-mannose. It functions in the pathway protein modification; protein glycosylation. With respect to regulation, inhibited by both 1-deoxymannojirimycin and kifunensine. Involved in the maturation of Asn-linked oligosaccharides. Progressively trim alpha-1,2-linked mannose residues from Man(9)GlcNAc(2) to produce Man(5)GlcNAc(2). This Oryctolagus cuniculus (Rabbit) protein is Mannosyl-oligosaccharide 1,2-alpha-mannosidase IA (MAN1A1).